A 98-amino-acid polypeptide reads, in one-letter code: ESAT-6-like protein EsxM (98 aa).

The protein belongs to the WXG100 family. CFP-10 subfamily.

It is found in the secreted. In terms of biological role, alters the host macrophage cytoskeleton and enhances macrophage motility. Promotes granuloma efflux, extrapulmonary dissemination of infection and bone disease. This Mycobacterium marinum (strain ATCC BAA-535 / M) protein is ESAT-6-like protein EsxM.